The following is a 192-amino-acid chain: UPF0312 protein PputW619_0484 (192 aa).

Positions 1-23 (MLKKTFAALALGTALLSAGQAMA) are cleaved as a signal peptide.

The protein belongs to the UPF0312 family. Type 1 subfamily.

It is found in the periplasm. In Pseudomonas putida (strain W619), this protein is UPF0312 protein PputW619_0484.